A 479-amino-acid polypeptide reads, in one-letter code: Neuronal acetylcholine receptor subunit alpha-9 (479 aa).

The signal sequence occupies residues 1-22; sequence MNWSHSCISFCWIYFAASRLRA. Over 23–238 the chain is Extracellular; sequence AETADGKYAQ…FTLLLKRRSS (216 aa). A glycan (N-linked (GlcNAc...) asparagine) is linked at N57. A disulfide bond links C155 and C169. A glycan (N-linked (GlcNAc...) asparagine) is linked at N170. Residues S191 and D193 each contribute to the Na(+) site. The cysteines at positions 219 and 220 are disulfide-linked. 3 helical membrane passes run 239 to 259, 269 to 289, and 303 to 323; these read FYIV…PLSF, VSLG…VAEI, and YIAT…VMNI. Topologically, residues 324–457 are cytoplasmic; that stretch reads HFCGAEARPV…WKKVAKVIDR (134 aa). A helical transmembrane segment spans residues 458–478; sequence FFMWIFFIMVFVMTILIIARA.

This sequence belongs to the ligand-gated ion channel (TC 1.A.9) family. Acetylcholine receptor (TC 1.A.9.1) subfamily. Alpha-9/CHRNA9 sub-subfamily. Forms homo- or heteropentameric channels in conjunction with CHRNA10. The native outer hair cell receptor is composed of CHRNA9:CHRNA10 heterooligomers. Found in the stoichiometric form (CHRNA9)2:(CHRNA10)3. In terms of processing, N-glycosylated. Expressed in cochlea, keratinocytes, pituitary gland, B-cells and T-cells.

It localises to the synaptic cell membrane. The protein resides in the cell membrane. The catalysed reaction is Ca(2+)(in) = Ca(2+)(out). It catalyses the reaction K(+)(in) = K(+)(out). The enzyme catalyses Na(+)(in) = Na(+)(out). It carries out the reaction Mg(2+)(in) = Mg(2+)(out). With respect to regulation, activated by a myriad of ligands such as acetylcholine. AChR activity is inhibited by the antagonist alpha-conotoxins RgIA and GeXXA, small disulfide-constrained peptides from cone snails. Functionally, component of neuronal acetylcholine receptors (nAChRs) that function as pentameric, ligand-gated cation channels with high calcium permeability among other activities. nAChRs are excitatory neurotrasnmitter receptors formed by a collection of nAChR subunits known to mediate synaptic transmission in the nervous system and the neuromuscular junction. Each nAchR subunit confers differential attributes to channel properties, including activation, deactivation and desensitization kinetics, pH sensitivity, cation permeability, and binding to allosteric modulators. Forms either homopentamers or heteropentamers with CHRNA10. Expressed in the inner ear, in sympathetic neurons and in other non-neuronal cells, such as skin keratinocytes and lymphocytes. nAChR formed by CHRNA9:CHRNA10 mediate central nervous system control of auditory and vestibular sensory processing. The channel is permeable to a range of divalent cations including calcium, the influx of which may activate a potassium current which hyperpolarizes the cell membrane. In the ear, mediates synaptic transmission between efferent olivocochlear fibers and hair cells of the cochlea, this may lead to a reduction in basilar membrane motion, altering the activity of auditory nerve fibers and reducing the range of dynamic hearing. This may protect against acoustic trauma. May also regulate keratinocyte adhesion. The protein is Neuronal acetylcholine receptor subunit alpha-9 of Homo sapiens (Human).